Reading from the N-terminus, the 534-residue chain is Coiled-coil domain-containing protein 183 (534 aa).

3 coiled-coil regions span residues 10 to 54 (EAQI…NLRR), 136 to 209 (DATK…DMTV), and 321 to 406 (RFLA…LLVI).

The protein is Coiled-coil domain-containing protein 183 (Ccdc183) of Mus musculus (Mouse).